The following is a 31-amino-acid chain: Cytochrome b6-f complex subunit 6 (31 aa).

A helical membrane pass occupies residues 4-24 (ITSYFGFLLAALTITSALLIG).

Belongs to the PetL family. In terms of assembly, the 4 large subunits of the cytochrome b6-f complex are cytochrome b6, subunit IV (17 kDa polypeptide, PetD), cytochrome f and the Rieske protein, while the 4 small subunits are PetG, PetL, PetM and PetN. The complex functions as a dimer.

It localises to the plastid. It is found in the chloroplast thylakoid membrane. In terms of biological role, component of the cytochrome b6-f complex, which mediates electron transfer between photosystem II (PSII) and photosystem I (PSI), cyclic electron flow around PSI, and state transitions. PetL is important for photoautotrophic growth as well as for electron transfer efficiency and stability of the cytochrome b6-f complex. This is Cytochrome b6-f complex subunit 6 from Magnolia grandiflora (Southern magnolia).